Consider the following 152-residue polypeptide: Ribosome maturation factor RimP (152 aa).

This sequence belongs to the RimP family.

The protein resides in the cytoplasm. Its function is as follows. Required for maturation of 30S ribosomal subunits. This chain is Ribosome maturation factor RimP, found in Burkholderia multivorans (strain ATCC 17616 / 249).